The primary structure comprises 161 residues: Regulatory protein RecX (161 aa).

It belongs to the RecX family.

It localises to the cytoplasm. Its function is as follows. Modulates RecA activity. The chain is Regulatory protein RecX from Halorhodospira halophila (strain DSM 244 / SL1) (Ectothiorhodospira halophila (strain DSM 244 / SL1)).